The primary structure comprises 649 residues: PTS system mannitol-specific EIICBA component (649 aa).

The region spanning 13 to 342 (FGRFLSNMVM…LLMKAQTSTE (330 aa)) is the PTS EIIC type-2 domain. 6 helical membrane passes run 25-46 (IGAF…WVPN), 51-71 (SLVG…TGGK), 135-156 (SAGI…PFVK), 166-186 (VNFL…EPAK), 274-293 (AIAG…AGLV), and 314-335 (LGVV…ALLM). The PTS EIIB type-2 domain maps to 384 to 475 (QSIIVACDAG…LVTQLLAAKR (92 aa)). Cys-390 functions as the Phosphocysteine intermediate; for EIIB activity in the catalytic mechanism. Cys-390 carries the phosphocysteine; by EIIA modification. Residues 504–646 (FQLQKENIHL…SDVLSILATS (143 aa)) enclose the PTS EIIA type-2 domain. The active-site Tele-phosphohistidine intermediate; for EIIA activity is His-564. His-564 carries the post-translational modification Phosphohistidine; by HPr.

Homodimer. Post-translationally, an intramolecular phosphotransfer takes places between His-564 and Cys-390.

The protein localises to the cell inner membrane. It catalyses the reaction D-mannitol(out) + N(pros)-phospho-L-histidyl-[protein] = D-mannitol 1-phosphate(in) + L-histidyl-[protein]. Its function is as follows. The phosphoenolpyruvate-dependent sugar phosphotransferase system (sugar PTS), a major carbohydrate active transport system, catalyzes the phosphorylation of incoming sugar substrates concomitantly with their translocation across the cell membrane. This system is involved in D-mannitol transport. The polypeptide is PTS system mannitol-specific EIICBA component (mtlA) (Vibrio cholerae serotype O1 (strain ATCC 39315 / El Tor Inaba N16961)).